A 379-amino-acid chain; its full sequence is Probable pectin lyase A (379 aa).

Residues methionine 1–alanine 19 form the signal peptide. Intrachain disulfides connect cysteine 82/cysteine 101 and cysteine 91/cysteine 225. Arginine 255 is a catalytic residue. A disulfide bridge connects residues cysteine 322 and cysteine 330.

This sequence belongs to the polysaccharide lyase 1 family.

Its subcellular location is the secreted. It carries out the reaction Eliminative cleavage of (1-&gt;4)-alpha-D-galacturonan methyl ester to give oligosaccharides with 4-deoxy-6-O-methyl-alpha-D-galact-4-enuronosyl groups at their non-reducing ends.. In terms of biological role, pectinolytic enzymes consist of four classes of enzymes: pectin lyase, polygalacturonase, pectin methylesterase and rhamnogalacturonase. Among pectinolytic enzymes, pectin lyase is the most important in depolymerization of pectin, since it cleaves internal glycosidic bonds of highly methylated pectins. The protein is Probable pectin lyase A (pelA) of Aspergillus oryzae (strain ATCC 42149 / RIB 40) (Yellow koji mold).